A 302-amino-acid chain; its full sequence is Quinolinate synthase (302 aa).

Positions 25 and 42 each coordinate iminosuccinate. Residue Cys-87 participates in [4Fe-4S] cluster binding. Iminosuccinate-binding positions include 113–115 and Ser-130; that span reads YVN. A [4Fe-4S] cluster-binding site is contributed by Cys-172. Iminosuccinate-binding positions include 198–200 and Thr-215; that span reads HPE. Cys-260 lines the [4Fe-4S] cluster pocket.

The protein belongs to the quinolinate synthase family. Type 2 subfamily. [4Fe-4S] cluster is required as a cofactor.

The protein localises to the cytoplasm. The enzyme catalyses iminosuccinate + dihydroxyacetone phosphate = quinolinate + phosphate + 2 H2O + H(+). It functions in the pathway cofactor biosynthesis; NAD(+) biosynthesis; quinolinate from iminoaspartate: step 1/1. Its function is as follows. Catalyzes the condensation of iminoaspartate with dihydroxyacetone phosphate to form quinolinate. The polypeptide is Quinolinate synthase (Methanoregula boonei (strain DSM 21154 / JCM 14090 / 6A8)).